The primary structure comprises 314 residues: E3 ubiquitin-protein ligase CHIP (314 aa).

Residues 1 to 11 (MKGKEEREREG) show a composition bias toward basic and acidic residues. A disordered region spans residues 1–47 (MKGKEEREREGGGGAVGPGAAGPGAGGGSPEKSHSAQEHKEQGNRLF). The segment covering 12 to 29 (GGGAVGPGAAGPGAGGGS) has biased composition (gly residues). Residues 31–43 (EKSHSAQEHKEQG) are compositionally biased toward basic and acidic residues. TPR repeat units lie at residues 36–69 (AQEH…NPLV), 70–103 (AVYY…DGQS), and 105–137 (KAHF…AKEQ). Positions 237–311 (DIPDYLCGKI…DAFISENGWV (75 aa)) constitute a U-box domain.

As to quaternary structure, homodimer.

It is found in the cytoplasm. Its subcellular location is the nucleus. The protein resides in the mitochondrion. It carries out the reaction S-ubiquitinyl-[E2 ubiquitin-conjugating enzyme]-L-cysteine + [acceptor protein]-L-lysine = [E2 ubiquitin-conjugating enzyme]-L-cysteine + N(6)-ubiquitinyl-[acceptor protein]-L-lysine.. In terms of biological role, E3 ubiquitin-protein ligase which targets misfolded chaperone substrates towards proteasomal degradation. Collaborates with ATXN3 in the degradation of misfolded chaperone substrates: ATXN3 restricting the length of ubiquitin chain attached to STUB1/CHIP substrates and preventing further chain extension. This chain is E3 ubiquitin-protein ligase CHIP, found in Gallus gallus (Chicken).